A 204-amino-acid polypeptide reads, in one-letter code: High frequency lysogenization protein HflD homolog (204 aa).

It belongs to the HflD family.

It is found in the cytoplasm. It localises to the cell inner membrane. This chain is High frequency lysogenization protein HflD homolog, found in Xanthomonas campestris pv. campestris (strain ATCC 33913 / DSM 3586 / NCPPB 528 / LMG 568 / P 25).